Here is a 139-residue protein sequence, read N- to C-terminus: uncharacterized protein (139 aa).

2 helical membrane passes run 35–55 (AYFK…AAAA) and 119–139 (CCLF…VFCV).

The protein localises to the membrane. This is an uncharacterized protein from Saccharomyces cerevisiae (strain ATCC 204508 / S288c) (Baker's yeast).